Reading from the N-terminus, the 707-residue chain is Dendrin (707 aa).

Disordered stretches follow at residues 1–22, 67–86, 94–195, 213–273, and 342–377; these read MLDG…DEES, QNRT…RRPW, ATNW…PWGG, AGTA…KKRL, and TEVA…GSEE. Residues 103–134 adopt a coiled-coil conformation; sequence AEVRAREQEKRKAASQEREAKETERKRRKAGG. The segment covering 105-127 has biased composition (basic and acidic residues); that stretch reads VRAREQEKRKAASQEREAKETER. The tract at residues 113-131 is nuclear localization; that stretch reads RKAASQEREAKETERKRRK. An interaction with MAGI2 region spans residues 186-236; sequence GVAWAGPWGGRRPGPPSYEAHLLLRGAAGTAPRRRWDRPPPYVAPPSYEGP. An interaction with ACTN1 region spans residues 340–434; sequence PVTEVALSGS…LEVWKVTRRA (95 aa). A compositionally biased stretch (basic residues) spans 359–369; sequence PRSRQHLRGSR. The residue at position 387 (Ser-387) is a Phosphoserine. Disordered stretches follow at residues 389–421 and 517–707; these read KKPP…EGTE and RVLN…GKRE. Residues 406 to 707 form an interaction with CD2AP and NPHS1 region; the sequence is GGTGWKESLG…TRKTPQGKRE (302 aa). 2 stretches are compositionally biased toward basic and acidic residues: residues 524–544 and 692–707; these read EGRE…EERS and GLVR…GKRE.

Forms a ternary complex with MAGI2 and SH3KBP1; recruits DDN to the cytoplasm. Interacts with MAGI1. Interacts with ACTN1 and may interact with WWC1. Interacts with the podocyte slit diaphragm proteins CD2AP, NPHS1 and NPHS2; the interaction with CD2AP and NPHS1 is direct. Specifically expressed in forebrain structures, particularly in neocortex, olfactory bulb, hippocampus, caudate-putamen, and limbic system (at protein level). Also detected in spleen, liver, kidney and placenta (at protein level).

It is found in the cell projection. The protein resides in the dendritic spine membrane. It localises to the cytoplasm. The protein localises to the endoplasmic reticulum membrane. Its subcellular location is the perikaryon. It is found in the nucleus. Its function is as follows. Promotes apoptosis of kidney glomerular podocytes. Podocytes are highly specialized cells essential to the ultrafiltration of blood, resulting in the extraction of urine and the retention of protein. The chain is Dendrin (Ddn) from Rattus norvegicus (Rat).